The following is a 147-amino-acid chain: Globin (147 aa).

The residue at position 2 (serine 2) is an N-acetylserine. The Globin domain maps to 2-147 (SLSAAEADLA…IIDALKAAGK (146 aa)). Residue histidine 96 coordinates heme b.

Belongs to the globin family. Monomer.

The polypeptide is Globin (Aplysia limacina (Sea hare)).